A 309-amino-acid chain; its full sequence is Olfactory receptor 8B4 (309 aa).

Topologically, residues 1 to 25 (MTLRNSSSVTEFILVGLSEQPELQL) are extracellular. A glycan (N-linked (GlcNAc...) asparagine) is linked at N5. A helical transmembrane segment spans residues 26–46 (PLFLLFLGIYVFTVVGNLGLI). The Cytoplasmic segment spans residues 47 to 54 (TLIGINPS). Residues 55–75 (LHTPMYFFLFNLSFIDLCYSC) traverse the membrane as a helical segment. At 76–98 (VFTPKMLNDFVSESIISYVGCMT) the chain is on the extracellular side. Cysteines 96 and 188 form a disulfide. The chain crosses the membrane as a helical span at residues 99–119 (QLFFFCFFVNSECYVLVSMAY). Residues 120–138 (DRYVAICNPLLYMVTMSPR) lie on the Cytoplasmic side of the membrane. A helical transmembrane segment spans residues 139-159 (VCFLLMFGSYVVGFAGAMAHT). The Extracellular segment spans residues 160 to 196 (GSMLRLTFCDSNVIDHYLCDVLPLLQLSCTSTHVSEL). Residues 197-216 (VFFIVVGVITMLSSISIVIS) traverse the membrane as a helical segment. Topologically, residues 217–236 (YALILSNILCIPSAEGRSKA) are cytoplasmic. A helical transmembrane segment spans residues 237-257 (FSTWGSHIIAVALFFGSGTFT). At 258-270 (YLTTSFPGSMNHG) the chain is on the extracellular side. Residues 271-291 (RFASVFYTNVVPMLNPSIYSL) form a helical membrane-spanning segment. At 292 to 309 (RNKDDKLALGKTLKRVLF) the chain is on the cytoplasmic side.

The protein belongs to the G-protein coupled receptor 1 family.

Its subcellular location is the cell membrane. Functionally, odorant receptor. The chain is Olfactory receptor 8B4 (OR8B4) from Homo sapiens (Human).